The following is a 421-amino-acid chain: ATP-dependent RNA helicase RhlB (421 aa).

The Q motif signature appears at Q9 to A37. The Helicase ATP-binding domain occupies L40–I219. A53 to T60 is a binding site for ATP. The DEAD box signature appears at D165–D168. One can recognise a Helicase C-terminal domain in the interval R245–M390. The disordered stretch occupies residues D392–G421. The span at P402–P414 shows a compositional bias: low complexity.

The protein belongs to the DEAD box helicase family. RhlB subfamily. Component of the RNA degradosome, which is a multiprotein complex involved in RNA processing and mRNA degradation.

It localises to the cytoplasm. It carries out the reaction ATP + H2O = ADP + phosphate + H(+). Its function is as follows. DEAD-box RNA helicase involved in RNA degradation. Has RNA-dependent ATPase activity and unwinds double-stranded RNA. The polypeptide is ATP-dependent RNA helicase RhlB (Escherichia coli O157:H7 (strain EC4115 / EHEC)).